The primary structure comprises 1186 residues: Myelin transcription factor 1-like protein (1186 aa).

The disordered stretch occupies residues 1–21; the sequence is MEVDTEEKRHRTRSKGVRVPV. Residues 22-65 form a CCHHC-type 1 zinc finger; that stretch reads EPAIQELFSCPTPGCDGSGHVSGKYARHRSVYGCPLAKKRKTQD. Residues cysteine 31, cysteine 36, histidine 49, and cysteine 55 each coordinate Zn(2+). 2 disordered regions span residues 56 to 175 and 220 to 247; these read PLAK…QMNC and RTES…GRKS. A compositionally biased stretch (acidic residues) spans 86–169; that stretch reads SVDECDDSDG…EEEEEEEENE (84 aa). The residue at position 250 (serine 250) is a Phosphoserine. Disordered regions lie at residues 342–372 and 449–513; these read SETN…GRTP and REKM…GCDG. Residues 343–357 show a composition bias toward polar residues; that stretch reads ETNPQERNPQQNMNI. 3 stretches are compositionally biased toward basic and acidic residues: residues 361–372, 449–487, and 495–505; these read VRPEEDFPGRTP, REKM…DSHV, and DPSRTEKKESK. 2 CCHHC-type zinc fingers span residues 497–540 and 541–584; these read SRTE…PPEI and LAMH…KLAK. Residues cysteine 506, cysteine 511, histidine 524, cysteine 530, cysteine 550, cysteine 555, histidine 568, and cysteine 574 each coordinate Zn(2+). Disordered stretches follow at residues 659 to 709 and 753 to 780; these read RAIA…GGGS and KPQD…MNKQ. The segment covering 666–683 has biased composition (basic and acidic residues); sequence QTRDISPKGYDDAKRYCK. Residues 685-709 show a composition bias toward low complexity; it reads PSPSSSSTSSYAPSSSSNLSCGGGS. 3 CCHHC-type zinc fingers span residues 896 to 939, 945 to 988, and 998 to 1041; these read LATS…GIRI, DKED…QKDG, and KSVK…MKKA. Cysteine 905, cysteine 910, histidine 923, cysteine 929, cysteine 954, cysteine 959, histidine 972, cysteine 978, cysteine 1007, cysteine 1012, histidine 1025, and cysteine 1031 together coordinate Zn(2+). Residues 1056–1130 adopt a coiled-coil conformation; sequence SNGIENDEEI…LANLSQSLIH (75 aa).

The protein belongs to the MYT1 family. As to quaternary structure, interacts with SIN3B.

The protein resides in the nucleus. It localises to the chromosome. Functionally, transcription factor that plays a key role in neuronal differentiation by specifically repressing expression of non-neuronal genes during neuron differentiation. In contrast to other transcription repressors that inhibit specific lineages, mediates repression of multiple differentiation programs. Also represses expression of negative regulators of neurogenesis, such as members of the Notch signaling pathway, including HES1. The combination of three transcription factors, ASCL1, POU3F2/BRN2 and MYT1L, is sufficient to reprogram fibroblasts and other somatic cells into induced neuronal (iN) cells in vitro. Directly binds the 5'-AAGTT-3' core motif present on the promoter of target genes and represses transcription by recruiting a multiprotein complex containing SIN3B. The 5'-AAGTT-3' core motif is absent from the promoter of neural genes. The chain is Myelin transcription factor 1-like protein from Homo sapiens (Human).